The chain runs to 128 residues: MNHIIETKDAPKPIGPYSQALKIDNFIILSGQIPIDVISNQIPENIAEQTYLVLKNIKLILVHAKFQVHNIIKTTVFTTDLKKINIINEIYKKFFIDNKSNFPARSCVEVQKLPKNVKIEIEAMAFKK.

Belongs to the RutC family.

The sequence is that of RutC family protein BU371 from Buchnera aphidicola subsp. Acyrthosiphon pisum (strain APS) (Acyrthosiphon pisum symbiotic bacterium).